Here is a 1483-residue protein sequence, read N- to C-terminus: MNGVAFCLVGIPPRPEPRPPQLPLGPRDGCSSGRPLPWPGPRTLLLRKSLQDGFGFTLRHFIVYPPESAVHCILKEEENGGRGGGPSPRHRLEPMDTIFVKNVKDGGPAHRAGLRTGDRLVKVNGESIIGKTYSQVIGLIQNSDDTLELSIMPKDEDILQLAYSQDAYLKGNEPYSGEARSIPEPPPLCYPRKTYAPPTRAPAWATMVPEPISALPPDPRSPAAWSDPGSRVPSATRAHLDNSSLGMSQPRPSPGAFPHLPSESRTPRAFPEPGSRVLPSRLECQQALSHWLSNQIPRRAGERRCPAMPPRARSASQDRLEDVTTHHPWPCSTSQDALSQLGQEGWHRARSDDYLSRATRSAEALGPGALVSPRLERCGWASQRPSARTSACPSRDLTQAPPPSGLQGLDDIGYIGYRSYSPSFQRRTGLLHALSFRDSPFGGLPTFSLAQSPASFPPEASEPPRVVRPDPSTRALEPPAEDHRDEVVLRQKPPTGRKVQLTPARQMNLGFGDESPEPEARGERLGRKVAPLATTEDSLASIPFIDEPTSPSIDLQAKHVPASAVVSSAMNSAPVLGTSPSSPTFTFALSRHYSQDCSSIKAGRRSSYLLAITTERSKSCDDGLNTFRDEGRVLRRLPSRVPSLRVLRSFFTDGSLDSWGTSEDADAPSKRHSTSDLSDATFSDIRREGWLYYKQILTKKGKKAGGGLRQWKRVYAVLRARSLSLSKERREPGPAAAGAAAAGAGEDEAAPVCIGSCLVDISYSETKRRHVFRLTTADFCEYLFQAEDRDDMLGWIRAIRENSRAEGEDPGCANQALISKKLNDYRKVSHSSGPKADSSPKGSRGLGGLKSEFLKQTAVRGLRTQEQPPGSKEDSVAAPKTPWGINIIKKNKKAAPRAFGIRLEECQPATENQRVPLIVAACCRIVEARGLESTGIYRVPGNNAVVSSLQEQLNRGPSDINLQDERWQDLNVISSLLKAFFRKLPEPLFTDDKYNDFIEANRIEDSRERMKTLRKLIRDLPGHYYETLKFLVGHLKTIADHSEKNKMEPRNLALVFGPTLVRTSEDNMTDMVTHMPDRYKIVETLIQHSDWFFSDDEDKGERTPVDDKEPQSVPNIEYLLPNIGRTVPPSDPGSDSTTCSSAKSKGSWVPKKEPYAREMLAISFISAVNRKRKKRREARGLGSSTDDDSEQEAHKAAVGTQEPPEGQLPGPAAEEAPGRLSPPTAPDERPAADTRSIVSGYSTLSTMDRSVCSGTGGRRAGAGDEADDERSELSHVETDTEGGAGPGGRLSRRPSFSSHHLMPCDTLARRRLSRSRAEAEGPGAGTARACPRGPEPPGSASSSSQESLRPPAAAPALGSRPSRVEALRLRLRGTADDMLAVRLRRPLSPETRRRRSSWRRHTVVVQSPLTDLNFNEWKELGGGGPQESVGVRPHSDNKDSGLSSLESTKARASSAASLPSGDLGALQGLPQRRSAAARLHQCL.

Residues 15–34 (PEPRPPQLPLGPRDGCSSGR) form a disordered region. Residues 71–155 (HCILKEEENG…TLELSIMPKD (85 aa)) form the PDZ domain. Disordered regions lie at residues 212–276 (ISAL…PGSR) and 300–345 (AGER…GQEG). Residues 316-325 (SQDRLEDVTT) are compositionally biased toward basic and acidic residues. A compositionally biased stretch (polar residues) spans 331–342 (CSTSQDALSQLG). Ser-361 and Ser-372 each carry phosphoserine. The disordered stretch occupies residues 385–407 (PSARTSACPSRDLTQAPPPSGLQ). The residue at position 421 (Ser-421) is a Phosphoserine. Disordered stretches follow at residues 448-485 (SLAQ…DHRD) and 508-527 (NLGF…RLGR). A phosphoserine mark is found at Ser-515, Ser-579, Ser-607, and Ser-619. A Phosphothreonine modification is found at Thr-652. Residues Ser-655, Ser-658, and Ser-673 each carry the phosphoserine modification. The PH domain occupies 684–804 (DIRREGWLYY…WIRAIRENSR (121 aa)). Residues 827 to 848 (KVSHSSGPKADSSPKGSRGLGG) are disordered. A Glycyl lysine isopeptide (Lys-Gly) (interchain with G-Cter in SUMO2) cross-link involves residue Lys-850. Disordered regions lie at residues 860 to 879 (RGLR…VAAP), 1093 to 1150 (FSDD…SWVP), 1171 to 1361 (KRKK…GSRP), and 1419 to 1469 (ELGG…LQGL). Residues 901 to 1093 (IRLEECQPAT…TLIQHSDWFF (193 aa)) form the Rho-GAP domain. The segment covering 1099-1110 (KGERTPVDDKEP) has biased composition (basic and acidic residues). Composition is skewed to polar residues over residues 1133–1144 (GSDSTTCSSAKS) and 1236–1248 (SIVS…STMD). The segment covering 1338 to 1351 (GSASSSSQESLRPP) has biased composition (low complexity). Residues 1440 to 1457 (SGLSSLESTKARASSAAS) are compositionally biased toward polar residues.

Functionally, GTPase activator for the Rho-type GTPases by converting them to an inactive GDP-bound state. This Mus musculus (Mouse) protein is Rho GTPase-activating protein 23 (Arhgap23).